Here is a 205-residue protein sequence, read N- to C-terminus: LexA repressor (205 aa).

The segment at residues 28-48 is a DNA-binding region (H-T-H motif); that stretch reads RAEIAASLGFRSPNAAEEHLK. Catalysis depends on for autocatalytic cleavage activity residues S122 and K159.

The protein belongs to the peptidase S24 family. In terms of assembly, homodimer.

It catalyses the reaction Hydrolysis of Ala-|-Gly bond in repressor LexA.. Its function is as follows. Represses a number of genes involved in the response to DNA damage (SOS response), including recA and lexA. Binds to the 16 bp palindromic sequence 5'-CTGTATATATATACAG-3'. In the presence of single-stranded DNA, RecA interacts with LexA causing an autocatalytic cleavage which disrupts the DNA-binding part of LexA, leading to derepression of the SOS regulon and eventually DNA repair. This chain is LexA repressor, found in Providencia rettgeri.